Reading from the N-terminus, the 213-residue chain is 3,4-dihydroxy-2-butanone 4-phosphate synthase (213 aa).

D-ribulose 5-phosphate-binding positions include 27–28 (RE), Asp-32, 140–144 (RTGHT), and Glu-164. Glu-28 contributes to the Mg(2+) binding site. Mg(2+) is bound at residue His-143.

Belongs to the DHBP synthase family. As to quaternary structure, homodimer. It depends on Mg(2+) as a cofactor. Requires Mn(2+) as cofactor.

The enzyme catalyses D-ribulose 5-phosphate = (2S)-2-hydroxy-3-oxobutyl phosphate + formate + H(+). It functions in the pathway cofactor biosynthesis; riboflavin biosynthesis; 2-hydroxy-3-oxobutyl phosphate from D-ribulose 5-phosphate: step 1/1. Catalyzes the conversion of D-ribulose 5-phosphate to formate and 3,4-dihydroxy-2-butanone 4-phosphate. The chain is 3,4-dihydroxy-2-butanone 4-phosphate synthase from Agrobacterium fabrum (strain C58 / ATCC 33970) (Agrobacterium tumefaciens (strain C58)).